Here is a 660-residue protein sequence, read N- to C-terminus: CXXC-type zinc finger protein 1 (660 aa).

Met1 carries the N-acetylmethionine modification. Over residues Met1–Gly14 the composition is skewed to acidic residues. The disordered stretch occupies residues Met1–Glu20. Phosphoserine is present on residues Ser6 and Ser19. Residues Tyr28–Lys76 form a PHD-type zinc finger. Basic and acidic residues predominate over residues Glu91–Arg120. Positions Glu91–Ile166 are disordered. At Ser124 the chain carries Phosphoserine. A CXXC-type zinc finger spans residues Gln164–Gln213. Zn(2+) is bound by residues Cys173, Cys176, Cys179, Cys185, Cys188, Cys191, Cys207, and Cys212. Disordered stretches follow at residues Phe223–Asp287 and Ala328–Ser375. Ser228 is subject to Phosphoserine. Thr231 carries the phosphothreonine modification. Residue Lys254 forms a Glycyl lysine isopeptide (Lys-Gly) (interchain with G-Cter in SUMO2) linkage. Residues Ala328–Glu338 are compositionally biased toward basic residues. Residues Lys339 to Tyr349 show a composition bias toward basic and acidic residues. Positions Lys350 to Trp362 are enriched in basic residues. The segment covering Lys363–Asp372 has biased composition (basic and acidic residues). Positions Ala426–Asn479 form a coiled coil.

Component of the SET1 complex, at least composed of the catalytic subunit (SETD1A or SETD1B), WDR5, WDR82, RBBP5, ASH2L/ASH2, CXXC1/CFP1, HCFC1 and DPY30. Interacts with SETD1A. Interacts with ZNF335. Interacts with PRDM9; this interaction does not link PRDM9-activated recombination hotspot sites with DSB machinery and is not required for the hotspot recognition pathway. Interacts with histone H3K4me3. In terms of tissue distribution, expressed in seminiferous tubules and in both germ cells and Sertoli cells. Highly expressed in spermatogonia, weakly expressed in leptonema and zygonema, and then again high expression in pachynema and diplonema, decreasing to undetectable levels in spermatids.

The protein resides in the nucleus speckle. The protein localises to the nucleus. In terms of biological role, transcriptional activator that exhibits a unique DNA binding specificity for CpG unmethylated motifs with a preference for CpGG. The protein is CXXC-type zinc finger protein 1 (Cxxc1) of Mus musculus (Mouse).